A 524-amino-acid polypeptide reads, in one-letter code: RNA-binding protein 39 (524 aa).

The tract at residues 1 to 146 (MADDIDIEAM…PVREPIDNLT (146 aa)) is disordered. Ala-2 carries the N-acetylalanine modification. The span at 14–32 (PYKKDENKLSSANGHEERS) shows a compositional bias: basic and acidic residues. Basic residues-rich tracts occupy residues 33-56 (KKRKKSKSRSRSHERKRSKSKERK) and 64-95 (KKSKSRERKRSRSKERRRSRSRSRDRRFRGRY). Tyr-95 carries the phosphotyrosine modification. A phosphoserine mark is found at Ser-97 and Ser-100. Lys-111 is covalently cross-linked (Glycyl lysine isopeptide (Lys-Gly) (interchain with G-Cter in SUMO2)). Ser-117 carries the post-translational modification Phosphoserine. Lys-119 is covalently cross-linked (Glycyl lysine isopeptide (Lys-Gly) (interchain with G-Cter in SUMO2)). The span at 119 to 130 (KLSRRRSRSKSP) shows a compositional bias: basic residues. A phosphoserine mark is found at Ser-121 and Ser-136. The segment covering 131–146 (FRKDKSPVREPIDNLT) has biased composition (basic and acidic residues). Thr-146 carries the post-translational modification Phosphothreonine. The RRM 1 domain occupies 153-230 (RTVFCMQLAA…VPIIVQASQA (78 aa)). Lys-244 is covalently cross-linked (Glycyl lysine isopeptide (Lys-Gly) (interchain with G-Cter in SUMO2)). An RRM 2 domain is found at 250–328 (MRLYVGSLHF…RPMKVGHVTE (79 aa)). Residues 291–355 (KGYGFITFSD…RTGIDLGTTG (65 aa)) are activating domain. Positions 291 to 400 (KGYGFITFSD…ADLQTRLSQQ (110 aa)) are interaction with JUN. Phosphoserine is present on residues Ser-334, Ser-337, and Ser-341. The tract at residues 355–400 (GRLQLMARLAEGTGLQIPPAAQQALQMSGSLAFGAVADLQTRLSQQ) is interaction with ESR1 and ESR2. The interaction with NCOA6 stretch occupies residues 400–524 (QTEASALAAA…ATQLLVPSRR (125 aa)). Positions 439 to 502 (EIKDDVIEEC…KMITAAYVPL (64 aa)) constitute an RRM 3 domain.

It belongs to the splicing factor SR family. In terms of assembly, interacts with NCOA6 and JUN. Interacts with ESR1 and ESR2, in the presence of estradiol (E2). Interacts with RSRC1 (via Arg/Ser-rich domain). Interacts with SF3B1. Interacts with ZNF106 (via N-terminus).

The protein resides in the nucleus speckle. Functionally, RNA-binding protein that acts as a pre-mRNA splicing factor. Acts by promoting exon inclusion via regulation of exon cassette splicing. Also acts as a transcriptional coactivator for steroid nuclear receptors ESR1/ER-alpha and ESR2/ER-beta, and JUN/AP-1, independently of the pre-mRNA splicing factor activity. The polypeptide is RNA-binding protein 39 (RBM39) (Pongo abelii (Sumatran orangutan)).